Here is a 522-residue protein sequence, read N- to C-terminus: Glycogen synthase (522 aa).

Residues 1–29 (MISAVLDTQGDHPQQQAGDRAAPSVPVPG) form a disordered region. Residue lysine 58 participates in ADP-alpha-D-glucose binding.

It belongs to the glycosyltransferase 1 family. Bacterial/plant glycogen synthase subfamily.

The catalysed reaction is [(1-&gt;4)-alpha-D-glucosyl](n) + ADP-alpha-D-glucose = [(1-&gt;4)-alpha-D-glucosyl](n+1) + ADP + H(+). It participates in glycan biosynthesis; glycogen biosynthesis. Functionally, synthesizes alpha-1,4-glucan chains using ADP-glucose. The sequence is that of Glycogen synthase from Pseudomonas fluorescens (strain ATCC BAA-477 / NRRL B-23932 / Pf-5).